A 451-amino-acid chain; its full sequence is Phosphoglucosamine mutase (451 aa).

Catalysis depends on serine 103, which acts as the Phosphoserine intermediate. Residues serine 103, aspartate 243, aspartate 245, and aspartate 247 each contribute to the Mg(2+) site. At serine 103 the chain carries Phosphoserine.

This sequence belongs to the phosphohexose mutase family. Mg(2+) is required as a cofactor. Post-translationally, activated by phosphorylation.

The catalysed reaction is alpha-D-glucosamine 1-phosphate = D-glucosamine 6-phosphate. Its function is as follows. Catalyzes the conversion of glucosamine-6-phosphate to glucosamine-1-phosphate. This chain is Phosphoglucosamine mutase, found in Levilactobacillus brevis (strain ATCC 367 / BCRC 12310 / CIP 105137 / JCM 1170 / LMG 11437 / NCIMB 947 / NCTC 947) (Lactobacillus brevis).